The primary structure comprises 374 residues: ATPase ASNA1 homolog (374 aa).

Lys-44–Thr-51 serves as a coordination point for ATP. Residue Asp-73 is part of the active site. Residues Glu-244 and Asn-271 each coordinate ATP.

Belongs to the arsA ATPase family. In terms of assembly, homodimer.

It is found in the cytoplasm. Its subcellular location is the endoplasmic reticulum. Its function is as follows. ATPase required for the post-translational delivery of tail-anchored (TA) proteins to the endoplasmic reticulum. Recognizes and selectively binds the transmembrane domain of TA proteins in the cytosol. This complex then targets to the endoplasmic reticulum by membrane-bound receptors, where the tail-anchored protein is released for insertion. This process is regulated by ATP binding and hydrolysis. ATP binding drives the homodimer towards the closed dimer state, facilitating recognition of newly synthesized TA membrane proteins. ATP hydrolysis is required for insertion. Subsequently, the homodimer reverts towards the open dimer state, lowering its affinity for the membrane-bound receptor, and returning it to the cytosol to initiate a new round of targeting. The protein is ATPase ASNA1 homolog of Plasmodium vivax (strain Salvador I).